The following is a 368-amino-acid chain: D-alanine--D-alanine ligase (368 aa).

The 208-residue stretch at 151 to 358 (KKLLAAEGLP…YGTLVSTLVD (208 aa)) folds into the ATP-grasp domain. 179-234 (RSRLHLPVFVKPARGGSSIGITRVAEWAALDDAIAHARRHDPKVIVESGIAGREVE) is an ATP binding site. Mg(2+) is bound by residues D313, E325, and N327.

The protein belongs to the D-alanine--D-alanine ligase family. The cofactor is Mg(2+). Requires Mn(2+) as cofactor.

It localises to the cytoplasm. The enzyme catalyses 2 D-alanine + ATP = D-alanyl-D-alanine + ADP + phosphate + H(+). It functions in the pathway cell wall biogenesis; peptidoglycan biosynthesis. In terms of biological role, cell wall formation. The protein is D-alanine--D-alanine ligase of Rhodococcus opacus (strain B4).